The sequence spans 359 residues: DNA polymerase IV (359 aa).

A UmuC domain is found at 4-185 (IIHIDMDCYF…LSLRKIPGVG (182 aa)). Positions 8 and 103 each coordinate Mg(2+). The active site involves glutamate 104.

Belongs to the DNA polymerase type-Y family. Monomer. Mg(2+) serves as cofactor.

The protein localises to the cytoplasm. The catalysed reaction is DNA(n) + a 2'-deoxyribonucleoside 5'-triphosphate = DNA(n+1) + diphosphate. Poorly processive, error-prone DNA polymerase involved in untargeted mutagenesis. Copies undamaged DNA at stalled replication forks, which arise in vivo from mismatched or misaligned primer ends. These misaligned primers can be extended by PolIV. Exhibits no 3'-5' exonuclease (proofreading) activity. May be involved in translesional synthesis, in conjunction with the beta clamp from PolIII. The protein is DNA polymerase IV of Shewanella sp. (strain ANA-3).